Consider the following 223-residue polypeptide: Cytotoxic T-lymphocyte protein 4 (223 aa).

Positions 1–35 (MAGFGFRRHGVQPDLASRTWPCTALFSLLFIPVFS) are cleaved as a signal peptide. Residues 36–161 (KGMHAAQPAV…IDPEPCPDSD (126 aa)) are Extracellular-facing. The Ig-like V-type domain maps to 39-140 (HAAQPAVVLA…VELMYPPPYY (102 aa)). Residues 46–50 (VLASS) form a homodimerization region. Intrachain disulfides connect Cys58/Cys129 and Cys85/Cys103. Asn113 carries N-linked (GlcNAc...) asparagine glycosylation. Positions 134 to 139 (MYPPPY) are important for interaction with CD80 and CD86. A glycan (N-linked (GlcNAc...) asparagine) is linked at Asn145. The tract at residues 150 to 155 (YVIDPE) is homodimerization. A helical membrane pass occupies residues 162 to 182 (FLLWILAAVSSGLFFYSFLIT). The Cytoplasmic segment spans residues 183-223 (AVSLSKMLKKRSPLTTGVYVKMPPTGPECEKQFQPYFIPIN). Residue Tyr201 is modified to Phosphotyrosine; by TXK and JAK2.

Homodimer; disulfide-linked. Binds to CD80/B7-1 and CD86/B7.2. Interacts with ICOSLG. N-glycosylation is important for dimerization. Post-translationally, phosphorylation at Tyr-201 prevents binding to the AP-2 adapter complex, blocks endocytosis, and leads to retention of CTLA4 on the cell surface.

It localises to the cell membrane. In terms of biological role, inhibitory receptor acting as a major negative regulator of T-cell responses. The affinity of CTLA4 for its natural B7 family ligands, CD80 and CD86, is considerably stronger than the affinity of their cognate stimulatory coreceptor CD28. In Canis lupus familiaris (Dog), this protein is Cytotoxic T-lymphocyte protein 4 (CTLA4).